We begin with the raw amino-acid sequence, 371 residues long: MGTTEATLRMENVDVKEEWQDEDLPRPLPEETGVELLGSPVEDTSSPPNTLNFNGAHRKRKTLVAPDINISLDQSEGSLLSDDFLDTPDDLDINVDDIETPDETDSLEFLGNGNELEWGDDTPVATAKNMPGDSADLFGDGTTEDGGAANGRLWRTVIIGEQEHRIDLHMIRPYMKVVTHGGYYGEGLNAIIVFAACFLPDSSLPDYHYIMENLFLYVISSLELLVAEDYMIVYLNGATPRRRMPGIGWLKKCYQMIDRRLRKNLKSLIIVHPSWFIRTVLAISRPFISVKFINKIQYVHSLEDLEQLIPMEHVQIPDCVLQYEEERLKARRESARPQPEFVMPRSEEKPEVAPVENRSAPVTEDQETSMS.

A disordered region spans residues 1–54; the sequence is MGTTEATLRMENVDVKEEWQDEDLPRPLPEETGVELLGSPVEDTSSPPNTLNFN. Residues 11 to 29 are compositionally biased toward basic and acidic residues; the sequence is ENVDVKEEWQDEDLPRPLP. Over residues 42-53 the composition is skewed to polar residues; that stretch reads EDTSSPPNTLNF. The interval 115–120 is required for interaction with KLC1; that stretch reads ELEWGD. Residues 171 to 328 enclose the CRAL-TRIO domain; that stretch reads IRPYMKVVTH…CVLQYEEERL (158 aa). The mediates interaction with GLS stretch occupies residues 190–371; that stretch reads AIIVFAACFL…VTEDQETSMS (182 aa). Positions 331–371 are disordered; it reads RRESARPQPEFVMPRSEEKPEVAPVENRSAPVTEDQETSMS.

Interacts with KLC1; may link mitochondria to KLC1 and regulate mitochondria localization into neuron projections. Interacts with GLS; the interaction is direct and may control GLS localization, negatively regulating its activity. Interacts with PIN1 (via WW domain); upon NGF stimulation. The interaction with PIN1 and GLS is competitive. Cleaved by CASP3 and CASP7. The potential C-terminal product released by CASP3 cleavage may inhibit the ERK signaling pathway through MAP2K2. In terms of processing, may be ubiquitinated by STUB1.

Its subcellular location is the cell projection. It localises to the axon. It is found in the dendrite. The protein resides in the presynapse. The protein localises to the mitochondrion. Its subcellular location is the growth cone. It localises to the cytoplasm. Its function is as follows. Functions in the development of neural tissues, particularly the postnatal maturation of the cerebellar cortex. May play a role in neurotransmission through regulation of glutaminase/GLS, an enzyme responsible for the production in neurons of the glutamate neurotransmitter. Alternatively, may regulate the localization of mitochondria within axons and dendrites. This chain is Caytaxin (ATCAY), found in Macaca fascicularis (Crab-eating macaque).